The sequence spans 119 residues: Non-structural protein 3b (119 aa).

The DRBM domain maps to 2–83 (DYVSLLNQFW…ARLICEQLQA (82 aa)).

As to quaternary structure, interacts with host RUNX1 isoform b.

Its subcellular location is the host nucleus. The protein localises to the host nucleolus. The protein resides in the host mitochondrion. In terms of biological role, induces host cell G0/G1 arrest and apoptosis. The polypeptide is Non-structural protein 3b (Tylonycteris pachypus (Lesser bamboo bat)).